The following is a 207-amino-acid chain: Segregation and condensation protein B (207 aa).

The protein belongs to the ScpB family. As to quaternary structure, homodimer. Homodimerization may be required to stabilize the binding of ScpA to the Smc head domains. Component of a cohesin-like complex composed of ScpA, ScpB and the Smc homodimer, in which ScpA and ScpB bind to the head domain of Smc. The presence of the three proteins is required for the association of the complex with DNA.

The protein localises to the cytoplasm. Functionally, participates in chromosomal partition during cell division. May act via the formation of a condensin-like complex containing Smc and ScpA that pull DNA away from mid-cell into both cell halves. This Mycoplasmopsis pulmonis (strain UAB CTIP) (Mycoplasma pulmonis) protein is Segregation and condensation protein B.